The primary structure comprises 228 residues: Geranylgeranylglyceryl phosphate synthase (228 aa).

Lys14 contributes to the sn-glycerol 1-phosphate binding site. Residues Asp16 and Thr42 each contribute to the Mg(2+) site. Sn-glycerol 1-phosphate contacts are provided by residues 160–165, Gly190, and 210–211; these read YIEYSG and GN.

It belongs to the GGGP/HepGP synthase family. Group I subfamily. Mg(2+) is required as a cofactor.

Its subcellular location is the cytoplasm. It carries out the reaction sn-glycerol 1-phosphate + (2E,6E,10E)-geranylgeranyl diphosphate = sn-3-O-(geranylgeranyl)glycerol 1-phosphate + diphosphate. It participates in membrane lipid metabolism; glycerophospholipid metabolism. Its function is as follows. Prenyltransferase that catalyzes the transfer of the geranylgeranyl moiety of geranylgeranyl diphosphate (GGPP) to the C3 hydroxyl of sn-glycerol-1-phosphate (G1P). This reaction is the first ether-bond-formation step in the biosynthesis of archaeal membrane lipids. This Methanocella arvoryzae (strain DSM 22066 / NBRC 105507 / MRE50) protein is Geranylgeranylglyceryl phosphate synthase.